Here is an 855-residue protein sequence, read N- to C-terminus: DNA mismatch repair protein MutS (855 aa).

613-620 (GPNMGGKS) lines the ATP pocket. The segment at 795–816 (ETTSLPHEVPSQQSGKPASPMQ) is disordered. Residues 796–816 (TTSLPHEVPSQQSGKPASPMQ) are compositionally biased toward polar residues.

Belongs to the DNA mismatch repair MutS family.

Functionally, this protein is involved in the repair of mismatches in DNA. It is possible that it carries out the mismatch recognition step. This protein has a weak ATPase activity. This chain is DNA mismatch repair protein MutS, found in Pseudomonas paraeruginosa (strain DSM 24068 / PA7) (Pseudomonas aeruginosa (strain PA7)).